Here is a 376-residue protein sequence, read N- to C-terminus: MGIKGLSKLLARYAPKSMKEGKIDQYSGRVIAIDASILVYQFISAVRDTTGATMVDEFGETTSHIIGTFYRTIKLIESGIKPVYVFDGKPPEMKDGELNKRKENAQKAQEQLDKALEEGDKEQAKKLMKRTARMTKEQSDEVKKLLQLMGIPCVEANCEAEGTCAALVKAGKCYATATEDMDALTLGSEYVVRKFSASDNKKEPIREYSLSSILEETGFSMEQFIDLCILLGCDYCDTIKGVGPITAFELIQQYKSIENVLKHLSDKYKVPENWKYKEARELFLHPDVADFSDYKLEWNKLDEEGIKQYLVTEKHFNEERVTKGIEKLKNVKSKKAQGRLDSFFSVKKVPLSKSEAASGVKRKKPTTKAKESRKKK.

Residues 1-105 (MGIKGLSKLL…GELNKRKENA (105 aa)) are N-domain. Aspartate 34 is a binding site for Mg(2+). DNA contacts are provided by arginine 47 and arginine 71. The Mg(2+) site is built by aspartate 87, glutamate 159, glutamate 161, aspartate 180, and aspartate 182. The I-domain stretch occupies residues 123-254 (QAKKLMKRTA…ITAFELIQQY (132 aa)). Position 159 (glutamate 159) interacts with DNA. The DNA site is built by glycine 232 and aspartate 234. Residue aspartate 234 coordinates Mg(2+). The tract at residues 336 to 344 (AQGRLDSFF) is interaction with PCNA. The interval 352-376 (SKSEAASGVKRKKPTTKAKESRKKK) is disordered. The span at 360 to 376 (VKRKKPTTKAKESRKKK) shows a compositional bias: basic residues.

This sequence belongs to the XPG/RAD2 endonuclease family. FEN1 subfamily. In terms of assembly, interacts with PCNA. Three molecules of FEN1 bind to one PCNA trimer with each molecule binding to one PCNA monomer. PCNA stimulates the nuclease activity without altering cleavage specificity. Requires Mg(2+) as cofactor. In terms of processing, phosphorylated. Phosphorylation upon DNA damage induces relocalization to the nuclear plasma.

It is found in the nucleus. The protein localises to the nucleolus. The protein resides in the nucleoplasm. It localises to the mitochondrion. Its function is as follows. Structure-specific nuclease with 5'-flap endonuclease and 5'-3' exonuclease activities involved in DNA replication and repair. During DNA replication, cleaves the 5'-overhanging flap structure that is generated by displacement synthesis when DNA polymerase encounters the 5'-end of a downstream Okazaki fragment. It enters the flap from the 5'-end and then tracks to cleave the flap base, leaving a nick for ligation. Also involved in the long patch base excision repair (LP-BER) pathway, by cleaving within the apurinic/apyrimidinic (AP) site-terminated flap. Acts as a genome stabilization factor that prevents flaps from equilibrating into structures that lead to duplications and deletions. Also possesses 5'-3' exonuclease activity on nicked or gapped double-stranded DNA, and exhibits RNase H activity. Also involved in replication and repair of rDNA and in repairing mitochondrial DNA. The polypeptide is Flap endonuclease 1 (Entamoeba dispar (strain ATCC PRA-260 / SAW760)).